A 436-amino-acid polypeptide reads, in one-letter code: Probable ABC transporter binding protein NosD (436 aa).

A signal peptide spans 1–27; the sequence is MFKAQATFSRYSAAVSLLLLFSGAAQA. PbH1 repeat units lie at residues 85-113, 115-136, 137-166, 167-188, 189-210, 233-255, 293-314, and 316-354; these read APDV…FILP, AERA…FVDG, TRDV…HLFA, VSGA…YIDT, SNGN…HYMF, SRKL…LMNY, SLFN…HLTA, and SEDN…YWSD.

The protein belongs to the NosD family. The complex may be composed of an ATP-binding protein (NosF), a transmembrane protein (NosY) and a solute-binding protein (NosD).

Its subcellular location is the periplasm. Required for the assembly of the copper chromophores of nitrous oxide reductase. Could be part of the ABC transporter complex NosDFY. The sequence is that of Probable ABC transporter binding protein NosD from Stutzerimonas stutzeri (Pseudomonas stutzeri).